The chain runs to 210 residues: Tetraspanin-31 (210 aa).

The Cytoplasmic segment spans residues 1-12 (MVCGGFACSKNA). Residues 13-33 (LCALNVVYMLVSLLLIGVAAW) form a helical membrane-spanning segment. Residues 34 to 44 (GKGLGLVSSIH) are Extracellular-facing. The helical transmembrane segment at 45-65 (IIGGVIAVGVFLLLIAVAGLV) threads the bilayer. Residues 66 to 72 (GAVNHHQ) lie on the Cytoplasmic side of the membrane. A helical membrane pass occupies residues 73 to 93 (VLLFFYMIILGLVFIFQFVIS). The Extracellular segment spans residues 94–173 (CSCLAINRSK…FLKHSDEALK (80 aa)). Asn-100, Asn-109, Asn-117, and Asn-134 each carry an N-linked (GlcNAc...) asparagine glycan. A helical transmembrane segment spans residues 174 to 194 (ILGGVGLFFSFTEILGVWLAM). The Cytoplasmic segment spans residues 195 to 210 (RFRNQKDPRANPSAFL).

It belongs to the tetraspanin (TM4SF) family.

It is found in the membrane. This chain is Tetraspanin-31 (TSPAN31), found in Homo sapiens (Human).